Consider the following 319-residue polypeptide: Olfactory receptor 13F1 (319 aa).

Topologically, residues 1-25 (MFPANWTSVKVFFFLGFFHYPKVQV) are extracellular. The N-linked (GlcNAc...) asparagine glycan is linked to N5. The helical transmembrane segment at 26–46 (IIFAVCLLMYLITLLGNIFLI) threads the bilayer. The Cytoplasmic portion of the chain corresponds to 47 to 54 (SITILDSH). The helical transmembrane segment at 55 to 75 (LHTPMYLFLSNLSFLDIWYSS) threads the bilayer. Over 76–99 (SALSPMLANFVSGRNTISFSGCAT) the chain is Extracellular. Cysteines 97 and 189 form a disulfide. A helical membrane pass occupies residues 100-120 (QMYLSLAMGSTECVLLPMMAY). Topologically, residues 121 to 139 (DRYVAICNPLRYPVIMNRR) are cytoplasmic. The helical transmembrane segment at 140–160 (TCVQIAAGSWMTGCLTAMVEM) threads the bilayer. Topologically, residues 161–197 (MSVLPLSLCGNSIINHFTCEILAILKLVCVDTSLVQL) are extracellular. Residues 198 to 217 (IMLVISVLLLPMPMLLICIS) traverse the membrane as a helical segment. Residues 218 to 237 (YAFILASILRISSVEGRSKA) lie on the Cytoplasmic side of the membrane. Residues 238-258 (FSTCTAHLMVVVLFYGTALSM) traverse the membrane as a helical segment. The Extracellular segment spans residues 259 to 271 (HLKPSAVDSQEID). The helical transmembrane segment at 272-292 (KFMALVYAGQTPMLNPIIYSL) threads the bilayer. Residues 293–319 (RNKEVKVALKKLLIRNHFNTAFISILK) lie on the Cytoplasmic side of the membrane.

This sequence belongs to the G-protein coupled receptor 1 family.

It localises to the cell membrane. Its function is as follows. Odorant receptor. The polypeptide is Olfactory receptor 13F1 (OR13F1) (Homo sapiens (Human)).